Consider the following 185-residue polypeptide: Elongation factor P (185 aa).

Belongs to the elongation factor P family.

Its subcellular location is the cytoplasm. It participates in protein biosynthesis; polypeptide chain elongation. Its function is as follows. Involved in peptide bond synthesis. Stimulates efficient translation and peptide-bond synthesis on native or reconstituted 70S ribosomes in vitro. Probably functions indirectly by altering the affinity of the ribosome for aminoacyl-tRNA, thus increasing their reactivity as acceptors for peptidyl transferase. This Lactococcus lactis subsp. lactis (strain IL1403) (Streptococcus lactis) protein is Elongation factor P (efp).